The following is a 530-amino-acid chain: Light-independent protochlorophyllide reductase subunit B (530 aa).

Asp36 contributes to the [4Fe-4S] cluster binding site. Catalysis depends on Asp290, which acts as the Proton donor. Residue 425 to 426 (GL) participates in substrate binding.

Belongs to the ChlB/BchB/BchZ family. Protochlorophyllide reductase is composed of three subunits; ChlL, ChlN and ChlB. Forms a heterotetramer of two ChlB and two ChlN subunits. [4Fe-4S] cluster is required as a cofactor.

It catalyses the reaction chlorophyllide a + oxidized 2[4Fe-4S]-[ferredoxin] + 2 ADP + 2 phosphate = protochlorophyllide a + reduced 2[4Fe-4S]-[ferredoxin] + 2 ATP + 2 H2O. It functions in the pathway porphyrin-containing compound metabolism; chlorophyll biosynthesis (light-independent). Its function is as follows. Component of the dark-operative protochlorophyllide reductase (DPOR) that uses Mg-ATP and reduced ferredoxin to reduce ring D of protochlorophyllide (Pchlide) to form chlorophyllide a (Chlide). This reaction is light-independent. The NB-protein (ChlN-ChlB) is the catalytic component of the complex. This chain is Light-independent protochlorophyllide reductase subunit B, found in Synechococcus sp. (strain WH7803).